Reading from the N-terminus, the 320-residue chain is Membrane protein insertase YidC 2 (320 aa).

The first 23 residues, Met1–Gly23, serve as a signal peptide directing secretion. Residue Cys24 is the site of N-palmitoyl cysteine attachment. The S-diacylglycerol cysteine moiety is linked to residue Cys24. Helical transmembrane passes span Tyr68–Leu88, Met142–Tyr162, Gly178–Ile198, Ala217–Val237, and Leu239–Met259. A disordered region spans residues Glu270–Lys320. Over residues Asn294 to Ser309 the composition is skewed to basic and acidic residues.

The protein belongs to the OXA1/ALB3/YidC family. Type 2 subfamily.

Its subcellular location is the cell membrane. In terms of biological role, required for the insertion and/or proper folding and/or complex formation of integral membrane proteins into the membrane. Involved in integration of membrane proteins that insert both dependently and independently of the Sec translocase complex, as well as at least some lipoproteins. The polypeptide is Membrane protein insertase YidC 2 (Lactococcus lactis subsp. lactis (strain IL1403) (Streptococcus lactis)).